The following is a 182-amino-acid chain: CDP-diacylglycerol--glycerol-3-phosphate 3-phosphatidyltransferase (182 aa).

The Cytoplasmic portion of the chain corresponds to 1–12 (MRLNIPTCLTLF). A helical membrane pass occupies residues 13-37 (RLIIVPFFIIVFYLPFSNASFYSAI). Topologically, residues 38 to 60 (IFILAALTDWFDGFLARKLNQTT) are periplasmic. The helical transmembrane segment at 61–81 (CFGAFLDPVADKIIVVIGLIL) threads the bilayer. The Cytoplasmic segment spans residues 82 to 86 (IIEYF). A helical transmembrane segment spans residues 87–107 (HSFWITIPSLIMIIREIIISS). Residues 108–145 (LREWMAEIGKNNLLSVSLISKLKTSIQMLAIFSLLWKE) are Periplasmic-facing. A helical transmembrane segment spans residues 146–168 (TYIIIIIGILSLYVSSILAFLSM). Residues 169-181 (LKYFYIAWRDLFR) lie on the Cytoplasmic side of the membrane.

The protein belongs to the CDP-alcohol phosphatidyltransferase class-I family.

The protein resides in the cell inner membrane. The enzyme catalyses a CDP-1,2-diacyl-sn-glycerol + sn-glycerol 3-phosphate = a 1,2-diacyl-sn-glycero-3-phospho-(1'-sn-glycero-3'-phosphate) + CMP + H(+). The protein operates within phospholipid metabolism; phosphatidylglycerol biosynthesis; phosphatidylglycerol from CDP-diacylglycerol: step 1/2. Functionally, catalyzes the conversion of cytidine diphosphate diacylglycerol (CDP-DG) and glycerol 3-phosphate into phosphatidylglycerol. Essential for the synthesis of anionic phospholipids, thereby playing a role in balancing the ratio of zwitterionic and anionic phospholipids, which is thought to be important for normal membrane function. The protein is CDP-diacylglycerol--glycerol-3-phosphate 3-phosphatidyltransferase of Wigglesworthia glossinidia brevipalpis.